The primary structure comprises 366 residues: Dihydroflavonol 4-reductase (366 aa).

Residues Lys45 and Tyr164 each contribute to the NADP(+) site.

This sequence belongs to the NAD(P)-dependent epimerase/dehydratase family. Dihydroflavonol-4-reductase subfamily.

The enzyme catalyses a (2R,3S,4S)-leucoanthocyanidin + NADP(+) = a (2R,3R)-dihydroflavonol + NADPH + H(+). The catalysed reaction is (2S)-flavan-4-ol + NADP(+) = (2S)-flavanone + NADPH + H(+). The protein operates within pigment biosynthesis; anthocyanin biosynthesis. Its function is as follows. Bifunctional enzyme involved in flavonoid metabolism. This is Dihydroflavonol 4-reductase (DFR) from Gerbera hybrida (Daisy).